An 85-amino-acid polypeptide reads, in one-letter code: Putative membrane protein insertion efficiency factor (85 aa).

Residues 66–85 (PLNSGGDDPVPPKLDDNREH) form a disordered region.

It belongs to the UPF0161 family.

It localises to the cell inner membrane. Functionally, could be involved in insertion of integral membrane proteins into the membrane. In Yersinia pestis bv. Antiqua (strain Antiqua), this protein is Putative membrane protein insertion efficiency factor.